The following is an 86-amino-acid chain: Large ribosomal subunit protein bL27 (86 aa).

This sequence belongs to the bacterial ribosomal protein bL27 family.

This is Large ribosomal subunit protein bL27 from Flavobacterium psychrophilum (strain ATCC 49511 / DSM 21280 / CIP 103535 / JIP02/86).